A 125-amino-acid polypeptide reads, in one-letter code: MSGRGKGGKARAKAKSRSSRAGLQFPVGRVHRFLRKGNYAERVGAGAPVYLAAVMEYLAAEILELAGNAARDNKKTRINPRHLQLAIRNDEELNKLLSGVTIAQGGVLPNIQAVLLPKKTAKAAK.

Positions 1 to 18 are enriched in basic residues; the sequence is MSGRGKGGKARAKAKSRS. The disordered stretch occupies residues 1 to 21; sequence MSGRGKGGKARAKAKSRSSRA. The residue at position 2 (Ser-2) is an N-acetylserine. The residue at position 2 (Ser-2) is a Phosphoserine. Position 104 is an N5-methylglutamine (Gln-104).

This sequence belongs to the histone H2A family. The nucleosome is a histone octamer containing two molecules each of H2A, H2B, H3 and H4 assembled in one H3-H4 heterotetramer and two H2A-H2B heterodimers. The octamer wraps approximately 147 bp of DNA.

The protein resides in the nucleus. It localises to the chromosome. Core component of nucleosome. Nucleosomes wrap and compact DNA into chromatin, limiting DNA accessibility to the cellular machineries which require DNA as a template. Histones thereby play a central role in transcription regulation, DNA repair, DNA replication and chromosomal stability. DNA accessibility is regulated via a complex set of post-translational modifications of histones, also called histone code, and nucleosome remodeling. The protein is Histone H2A of Asterias rubens (Common European starfish).